Reading from the N-terminus, the 100-residue chain is Aspartyl/glutamyl-tRNA(Asn/Gln) amidotransferase subunit C (100 aa).

It belongs to the GatC family. In terms of assembly, heterotrimer of A, B and C subunits.

It carries out the reaction L-glutamyl-tRNA(Gln) + L-glutamine + ATP + H2O = L-glutaminyl-tRNA(Gln) + L-glutamate + ADP + phosphate + H(+). It catalyses the reaction L-aspartyl-tRNA(Asn) + L-glutamine + ATP + H2O = L-asparaginyl-tRNA(Asn) + L-glutamate + ADP + phosphate + 2 H(+). Allows the formation of correctly charged Asn-tRNA(Asn) or Gln-tRNA(Gln) through the transamidation of misacylated Asp-tRNA(Asn) or Glu-tRNA(Gln) in organisms which lack either or both of asparaginyl-tRNA or glutaminyl-tRNA synthetases. The reaction takes place in the presence of glutamine and ATP through an activated phospho-Asp-tRNA(Asn) or phospho-Glu-tRNA(Gln). This is Aspartyl/glutamyl-tRNA(Asn/Gln) amidotransferase subunit C from Streptococcus agalactiae serotype III (strain NEM316).